Reading from the N-terminus, the 39-residue chain is MIEPLLCGIVLGLVPVTLLGLFVSAWNQYRRSSSMPDWE.

The chain crosses the membrane as a helical span at residues 5–25 (LLCGIVLGLVPVTLLGLFVSA).

Belongs to the PetG family. The 4 large subunits of the cytochrome b6-f complex are cytochrome b6, subunit IV (17 kDa polypeptide, PetD), cytochrome f and the Rieske protein, while the 4 small subunits are PetG, PetL, PetM and PetN. The complex functions as a dimer.

It localises to the cellular thylakoid membrane. Functionally, component of the cytochrome b6-f complex, which mediates electron transfer between photosystem II (PSII) and photosystem I (PSI), cyclic electron flow around PSI, and state transitions. PetG is required for either the stability or assembly of the cytochrome b6-f complex. The polypeptide is Cytochrome b6-f complex subunit 5 (Prochlorococcus marinus (strain NATL1A)).